We begin with the raw amino-acid sequence, 943 residues long: U3 small nucleolar RNA-associated protein 12 (943 aa).

10 WD repeats span residues 77–107, 119–149, 161–190, 202–230, 389–418, 428–458, 471–501, 571–601, 613–643, and 655–685; these read AKPAECTYLEAHKDTDLLAVGYADGVIKVWD, GHKAAITLLQFDGTGTRLISGSKDSNIIVWD, SHKDSITGFWCQGEDWLISTSKDGMIKLWD, AHTGECWGLAVKDDLLITTGTDSQVKIWK, GQRTDVRSIDISDDNKLLATASNGSLKIWN, FECGYALTCKFLPGGLLVILGTRNGELQLFD, AHDAAIWSLDLTSDGKRLVTGSADKTVKFWD, GHKLPVLSIDISFDSKMIITSSADKNIKIWG, AHQDSIMNVKFLPQSHNFFSCSKDAVVKYWD, and AHQSEVWALAVATDGGFVVSSSHDHSIRIWE. The disordered stretch occupies residues 715–739; it reads EGNGDDAFKADASGEGVEDEASGVH.

This sequence belongs to the WD repeat WDR3/UTP12 family. In terms of assembly, interacts with snoRNA U3. Interacts with MPP10. Component of the ribosomal small subunit (SSU) processome composed of at least 40 protein subunits and snoRNA U3.

It localises to the nucleus. The protein resides in the nucleolus. Functionally, involved in nucleolar processing of pre-18S ribosomal RNA. The polypeptide is U3 small nucleolar RNA-associated protein 12 (DIP2) (Saccharomyces cerevisiae (strain ATCC 204508 / S288c) (Baker's yeast)).